Here is a 225-residue protein sequence, read N- to C-terminus: Holliday junction branch migration complex subunit RuvA (225 aa).

The interval 1–71 (MISWINGELV…EDSDLLFGFT (71 aa)) is domain I. Residues 72-150 (SKDQKFFFIE…SKIQIEEEKG (79 aa)) are domain II. Residues 151–161 (QEEFEITNPEI) form a flexible linker region. The interval 161–225 (IYKLMEDLQL…LDQGNSNLAR (65 aa)) is domain III.

Belongs to the RuvA family. Homotetramer. Forms an RuvA(8)-RuvB(12)-Holliday junction (HJ) complex. HJ DNA is sandwiched between 2 RuvA tetramers; dsDNA enters through RuvA and exits via RuvB. An RuvB hexamer assembles on each DNA strand where it exits the tetramer. Each RuvB hexamer is contacted by two RuvA subunits (via domain III) on 2 adjacent RuvB subunits; this complex drives branch migration. In the full resolvosome a probable DNA-RuvA(4)-RuvB(12)-RuvC(2) complex forms which resolves the HJ.

Its subcellular location is the cytoplasm. Its function is as follows. The RuvA-RuvB-RuvC complex processes Holliday junction (HJ) DNA during genetic recombination and DNA repair, while the RuvA-RuvB complex plays an important role in the rescue of blocked DNA replication forks via replication fork reversal (RFR). RuvA specifically binds to HJ cruciform DNA, conferring on it an open structure. The RuvB hexamer acts as an ATP-dependent pump, pulling dsDNA into and through the RuvAB complex. HJ branch migration allows RuvC to scan DNA until it finds its consensus sequence, where it cleaves and resolves the cruciform DNA. The chain is Holliday junction branch migration complex subunit RuvA from Prochlorococcus marinus (strain MIT 9215).